Reading from the N-terminus, the 453-residue chain is GTPase Der (453 aa).

EngA-type G domains are found at residues 3–167 and 188–361; these read PIIV…INSK and VKIA…HTSQ. Residues 9–16, 57–61, 119–122, 194–201, 241–245, and 306–309 contribute to the GTP site; these read GRTNVGKS, DTAGI, NKID, GKPNVGKS, DTAGM, and NKCD. The KH-like domain maps to 362–446; the sequence is KKIKTSQVMK…PIKIQFKETM (85 aa).

It belongs to the TRAFAC class TrmE-Era-EngA-EngB-Septin-like GTPase superfamily. EngA (Der) GTPase family. Associates with the 50S ribosomal subunit.

In terms of biological role, GTPase that plays an essential role in the late steps of ribosome biogenesis. This is GTPase Der from Buchnera aphidicola subsp. Schizaphis graminum (strain Sg).